The sequence spans 907 residues: Probable disease resistance protein At1g58390 (907 aa).

The NB-ARC domain maps to 144–456 (QGDRQREMRQ…AEGISTAEDY (313 aa)). 190–197 (GMGGLGKT) serves as a coordination point for ATP. LRR repeat units follow at residues 608-631 (LIHLRYLSLQDAKVSHLPSSLGNL) and 843-868 (MPLLETLSILDCEELKEIPDGLRFIY).

This sequence belongs to the disease resistance NB-LRR family.

In terms of biological role, possible disease resistance protein. The protein is Probable disease resistance protein At1g58390 of Arabidopsis thaliana (Mouse-ear cress).